The primary structure comprises 494 residues: Alpha-amylase A (494 aa).

An N-terminal signal peptide occupies residues 1–18 (MFLAKSIVCLALLAVANA). A Pyrrolidone carboxylic acid modification is found at glutamine 19. A disulfide bridge connects residues cysteine 46 and cysteine 102. Residues asparagine 116, arginine 165, and aspartate 174 each coordinate Ca(2+). Residues cysteine 153 and cysteine 167 are joined by a disulfide bond. Arginine 202 is a binding site for chloride. Aspartate 204 (nucleophile) is an active-site residue. Residue histidine 208 participates in Ca(2+) binding. Glutamate 241 serves as the catalytic Proton donor. Positions 304 and 343 each coordinate chloride. Intrachain disulfides connect cysteine 376/cysteine 382 and cysteine 448/cysteine 460.

The protein belongs to the glycosyl hydrolase 13 family. Monomer. Ca(2+) is required as a cofactor. Chloride serves as cofactor.

It catalyses the reaction Endohydrolysis of (1-&gt;4)-alpha-D-glucosidic linkages in polysaccharides containing three or more (1-&gt;4)-alpha-linked D-glucose units.. This chain is Alpha-amylase A (Amy-p), found in Drosophila melanogaster (Fruit fly).